A 496-amino-acid polypeptide reads, in one-letter code: Cytosol aminopeptidase (496 aa).

Residues K258 and D263 each contribute to the Mn(2+) site. K270 is a catalytic residue. Mn(2+) contacts are provided by D281, D340, and E342. R344 is a catalytic residue.

This sequence belongs to the peptidase M17 family. Requires Mn(2+) as cofactor.

It is found in the cytoplasm. It carries out the reaction Release of an N-terminal amino acid, Xaa-|-Yaa-, in which Xaa is preferably Leu, but may be other amino acids including Pro although not Arg or Lys, and Yaa may be Pro. Amino acid amides and methyl esters are also readily hydrolyzed, but rates on arylamides are exceedingly low.. It catalyses the reaction Release of an N-terminal amino acid, preferentially leucine, but not glutamic or aspartic acids.. Presumably involved in the processing and regular turnover of intracellular proteins. Catalyzes the removal of unsubstituted N-terminal amino acids from various peptides. The chain is Cytosol aminopeptidase (pepA) from Helicobacter pylori (strain J99 / ATCC 700824) (Campylobacter pylori J99).